Here is a 423-residue protein sequence, read N- to C-terminus: Pre-mRNA polyadenylation factor fip-1 (423 aa).

Positions 1 to 11 are enriched in acidic residues; sequence MDIDEDEDFYA. Disordered regions lie at residues 1-178, 278-307, and 360-423; these read MDID…PVRT, GPGG…GGPG, and PGGG…GRRW. Positions 19-61 are enriched in low complexity; the sequence is PPTTAATTTTPATTTTTAAPTTTTTTTSTTTASAPPTTTSSST. A compositionally biased stretch (acidic residues) spans 65–90; that stretch reads DELEEGEEEDEGGGAMDEDDDSDIDI. A compositionally biased stretch (low complexity) spans 135 to 146; that stretch reads GTNSNSNSSSNK. Positions 360-415 are enriched in gly residues; the sequence is PGGGPGGPGTGGMGPGGPGGQGGQGQQFGGGFGGNQGQGGYGGYDQMGGAGGGGRG.

The protein belongs to the FIP1 family.

It localises to the nucleus. Pre-mRNA polyadenylation factor that directly interacts with poly(A) polymerase. In Neurospora crassa (strain ATCC 24698 / 74-OR23-1A / CBS 708.71 / DSM 1257 / FGSC 987), this protein is Pre-mRNA polyadenylation factor fip-1 (fip-1).